The primary structure comprises 502 residues: Polyadenylate-binding protein, cytoplasmic and nuclear (502 aa).

RRM domains are found at residues 14-90 (LTIY…KKDE), 96-176 (GNIF…LYNP), 191-275 (TNCF…KGQR), and 299-376 (KNLY…YFKN).

This sequence belongs to the polyadenylate-binding protein type-1 family.

It localises to the cytoplasm. The protein resides in the nucleus. In terms of biological role, binds the poly(A) tail of mRNA. Appears to be an important mediator of the multiple roles of the poly(A) tail in mRNA biogenesis, stability and translation. The protein is Polyadenylate-binding protein, cytoplasmic and nuclear (PAB1) of Encephalitozoon cuniculi (strain GB-M1) (Microsporidian parasite).